Consider the following 504-residue polypeptide: ATP-dependent RNA helicase DBP3 (504 aa).

Over residues 1–14 (MSKDELKDKKRKVE) the composition is skewed to basic and acidic residues. The tract at residues 1–65 (MSKDELKDKK…KSETESFAAS (65 aa)) is disordered. The segment covering 20 to 53 (SKKKLKKDKKDKKDKKDKKDKKDKKEKKEKKEKK) has biased composition (basic residues). The Q motif motif lies at 94-120 (LDFSQVSFIDQIQKEISKFPKPTPIQA). One can recognise a Helicase ATP-binding domain in the interval 123–296 (WPYLLAGKDV…SSFMSEPVKV (174 aa)). 136 to 143 (AETGSGKT) lines the ATP pocket. Positions 243–246 (DEAD) match the DEAD box motif. A Helicase C-terminal domain is found at 325 to 474 (KLLELLKKYH…PVPEELKKFG (150 aa)).

The protein belongs to the DEAD box helicase family. DDX5/DBP2 subfamily.

It localises to the nucleus. The protein resides in the nucleolus. It catalyses the reaction ATP + H2O = ADP + phosphate + H(+). In terms of biological role, ATP-dependent RNA helicase required for 60S ribosomal subunit synthesis. Involved in efficient pre-rRNA processing, predominantly at site A3, which is necessary for the normal formation of 25S and 5.8S rRNAs. The protein is ATP-dependent RNA helicase DBP3 (DBP3) of Kluyveromyces lactis (strain ATCC 8585 / CBS 2359 / DSM 70799 / NBRC 1267 / NRRL Y-1140 / WM37) (Yeast).